A 444-amino-acid polypeptide reads, in one-letter code: Tol-Pal system protein TolB (444 aa).

A signal peptide spans 1–19; the sequence is MRNIIYFILSLLFSVTSYA.

Belongs to the TolB family. The Tol-Pal system is composed of five core proteins: the inner membrane proteins TolA, TolQ and TolR, the periplasmic protein TolB and the outer membrane protein Pal. They form a network linking the inner and outer membranes and the peptidoglycan layer.

It is found in the periplasm. Part of the Tol-Pal system, which plays a role in outer membrane invagination during cell division and is important for maintaining outer membrane integrity. In Rickettsia africae (strain ESF-5), this protein is Tol-Pal system protein TolB.